The chain runs to 140 residues: Nucleoside diphosphate kinase (140 aa).

ATP contacts are provided by K11, F59, R87, T93, R104, and N114. The Pros-phosphohistidine intermediate role is filled by H117.

Belongs to the NDK family. In terms of assembly, homotetramer. Mg(2+) serves as cofactor.

The protein resides in the cytoplasm. It catalyses the reaction a 2'-deoxyribonucleoside 5'-diphosphate + ATP = a 2'-deoxyribonucleoside 5'-triphosphate + ADP. It carries out the reaction a ribonucleoside 5'-diphosphate + ATP = a ribonucleoside 5'-triphosphate + ADP. Major role in the synthesis of nucleoside triphosphates other than ATP. The ATP gamma phosphate is transferred to the NDP beta phosphate via a ping-pong mechanism, using a phosphorylated active-site intermediate. This Methylobacterium sp. (strain 4-46) protein is Nucleoside diphosphate kinase.